We begin with the raw amino-acid sequence, 206 residues long: Ribosomal RNA small subunit methyltransferase G (206 aa).

S-adenosyl-L-methionine-binding positions include Gly74, Leu79, 125–126, and Arg140; that span reads VE.

Belongs to the methyltransferase superfamily. RNA methyltransferase RsmG family.

It is found in the cytoplasm. It catalyses the reaction guanosine(527) in 16S rRNA + S-adenosyl-L-methionine = N(7)-methylguanosine(527) in 16S rRNA + S-adenosyl-L-homocysteine. Its function is as follows. Specifically methylates the N7 position of guanine in position 527 of 16S rRNA. This chain is Ribosomal RNA small subunit methyltransferase G, found in Shewanella amazonensis (strain ATCC BAA-1098 / SB2B).